Here is a 529-residue protein sequence, read N- to C-terminus: DNA-binding protein (529 aa).

The span at 1-17 shows a compositional bias: basic and acidic residues; the sequence is MASREEEQRETTPERGR. Disordered regions lie at residues 1–108 and 125–168; these read MASR…VDSE and PVLI…SEST. The span at 129–139 shows a compositional bias: basic residues; that stretch reads KHGKGGKRTVR. A compositionally biased stretch (basic and acidic residues) spans 140-155; sequence RLNEDDPVARGMRTQE. Acidic residues predominate over residues 156 to 165; the sequence is EKEESSEAES. Tyr195 is modified (phosphotyrosine; by host). The Zn(2+) site is built by Cys284 and His286. The flexible loop stretch occupies residues 297–331; it reads IEMDVTSENGQRALKEQSSKAKIVKNRWGRNVVQI. Cys339, Cys355, Cys396, Cys398, Cys450, and Cys467 together coordinate Zn(2+). A C-terminal arm, DBP binding region spans residues 513–529; sequence VSLPVAHSDARQNPFDF.

This sequence belongs to the adenoviridae E2A DNA-binding protein family. In terms of assembly, homomultimerizes on viral ssDNA bound to pTP. Forms an initiation complex with viral polymerase, pTP and hosts NFIA and POU2F1/OCT1. Interacts with host SRCAP.

The protein resides in the host nucleus. Its function is as follows. Plays a role in the elongation phase of viral strand displacement replication by unwinding the template in an ATP-independent fashion, employing its capacity to form multimers. Also enhances the rate of initiation. Released from template upon second strand synthesis. Assembles in complex with viral pTP, viral pol, host NFIA and host POU2F1/OCT1 on viral origin of replication. Covers the whole ssDNA genome during synthesis. The complementary strand synthesis induces its release from DNA template. May inhibit cellular transcription mediated by the interaction between host SRCAP and CBP. The polypeptide is DNA-binding protein (Human adenovirus C serotype 2 (HAdV-2)).